Consider the following 324-residue polypeptide: Ribosomal RNA small subunit methyltransferase H (324 aa).

Residues G35 to H37, D55, F85, D103, and Q110 contribute to the S-adenosyl-L-methionine site.

This sequence belongs to the methyltransferase superfamily. RsmH family.

The protein resides in the cytoplasm. The catalysed reaction is cytidine(1402) in 16S rRNA + S-adenosyl-L-methionine = N(4)-methylcytidine(1402) in 16S rRNA + S-adenosyl-L-homocysteine + H(+). Specifically methylates the N4 position of cytidine in position 1402 (C1402) of 16S rRNA. The protein is Ribosomal RNA small subunit methyltransferase H of Solidesulfovibrio magneticus (strain ATCC 700980 / DSM 13731 / RS-1) (Desulfovibrio magneticus).